Reading from the N-terminus, the 303-residue chain is Probable cell division protein WhiA (303 aa).

A DNA-binding region (H-T-H motif) is located at residues 272 to 303 (SIQQLADSLSTPLTKSGVNHRLRKINKIADEL).

It belongs to the WhiA family.

Functionally, involved in cell division and chromosome segregation. This is Probable cell division protein WhiA from Streptococcus pneumoniae serotype 2 (strain D39 / NCTC 7466).